The sequence spans 225 residues: Octanoyltransferase (225 aa).

In terms of domain architecture, BPL/LPL catalytic spans 42–219 (KNRQASMIFC…SICSALEYIN (178 aa)). Residues 79-86 (RGGKITWH), 149-151 (AIG), and 162-164 (GFA) each bind substrate. The Acyl-thioester intermediate role is filled by cysteine 180.

The protein belongs to the LipB family.

Its subcellular location is the cytoplasm. The catalysed reaction is octanoyl-[ACP] + L-lysyl-[protein] = N(6)-octanoyl-L-lysyl-[protein] + holo-[ACP] + H(+). The protein operates within protein modification; protein lipoylation via endogenous pathway; protein N(6)-(lipoyl)lysine from octanoyl-[acyl-carrier-protein]: step 1/2. Functionally, catalyzes the transfer of endogenously produced octanoic acid from octanoyl-acyl-carrier-protein onto the lipoyl domains of lipoate-dependent enzymes. Lipoyl-ACP can also act as a substrate although octanoyl-ACP is likely to be the physiological substrate. This Tropheryma whipplei (strain TW08/27) (Whipple's bacillus) protein is Octanoyltransferase.